Consider the following 145-residue polypeptide: MTTRREGRELALQALYSKDLVLQDANTTLKRITESFSEGEEPTLSVNSKAYAFASELVNGVVSNLQAIDSRIAEKSKHWSMARMARVDLNILRLAVFELLYRPDIPKNVTMNEAIEVAKKFGADDSASFVNGILDEIASTVTDKE.

It belongs to the NusB family.

Involved in transcription antitermination. Required for transcription of ribosomal RNA (rRNA) genes. Binds specifically to the boxA antiterminator sequence of the ribosomal RNA (rrn) operons. The chain is Transcription antitermination protein NusB from Citrifermentans bemidjiense (strain ATCC BAA-1014 / DSM 16622 / JCM 12645 / Bem) (Geobacter bemidjiensis).